The following is a 936-amino-acid chain: Phosphoenolpyruvate carboxylase (936 aa).

Active-site residues include H155 and K595.

This sequence belongs to the PEPCase type 1 family. As to quaternary structure, homotetramer. Requires Mg(2+) as cofactor. It depends on Mn(2+) as a cofactor.

The enzyme catalyses oxaloacetate + phosphate = phosphoenolpyruvate + hydrogencarbonate. Its activity is regulated as follows. Exhibits positive allosteric property with acetyl-CoA and fructose 1,6-bisphosphate, and a negative one with L-aspartate and L-malate. Functionally, forms oxaloacetate, a four-carbon dicarboxylic acid source for the tricarboxylic acid cycle. This Rhodothermus marinus (Rhodothermus obamensis) protein is Phosphoenolpyruvate carboxylase (ppc).